Reading from the N-terminus, the 323-residue chain is Thymidylate synthase (323 aa).

DUMP-binding positions include arginine 21 and 172-173 (RR). Cysteine 192 serves as the catalytic Nucleophile. Residues 214-217 (RSND), asparagine 225, and 255-257 (HVY) each bind dUMP. Aspartate 217 provides a ligand contact to (6R)-5,10-methylene-5,6,7,8-tetrahydrofolate. Alanine 322 provides a ligand contact to (6R)-5,10-methylene-5,6,7,8-tetrahydrofolate.

The protein belongs to the thymidylate synthase family. Bacterial-type ThyA subfamily. Homodimer.

Its subcellular location is the cytoplasm. It carries out the reaction dUMP + (6R)-5,10-methylene-5,6,7,8-tetrahydrofolate = 7,8-dihydrofolate + dTMP. It functions in the pathway pyrimidine metabolism; dTTP biosynthesis. Its function is as follows. Catalyzes the reductive methylation of 2'-deoxyuridine-5'-monophosphate (dUMP) to 2'-deoxythymidine-5'-monophosphate (dTMP) while utilizing 5,10-methylenetetrahydrofolate (mTHF) as the methyl donor and reductant in the reaction, yielding dihydrofolate (DHF) as a by-product. This enzymatic reaction provides an intracellular de novo source of dTMP, an essential precursor for DNA biosynthesis. This chain is Thymidylate synthase, found in Bordetella parapertussis (strain 12822 / ATCC BAA-587 / NCTC 13253).